The primary structure comprises 567 residues: Multidrug transporter TPO1_1 (567 aa).

The interval 1 to 71 is disordered; that stretch reads MVEEISPKYT…NRRMSRILTG (71 aa). An N-linked (GlcNAc...) asparagine glycan is attached at N120. The next 12 helical transmembrane spans lie at 128-148, 157-177, 194-214, 224-244, 253-273, 283-303, 358-378, 396-416, 436-456, 471-491, 498-520, and 531-551; these read IICIVLCLNCICISMGSSIFA, IYHVIPVVAILGVTLYVFGFA, GVLVISAFGFAVFQFAVATSK, FFGGLIGAAPMAVVPAAFADM, AICLFSLGVFVGPILSPVMGS, WLEYVTGCFASALFVAVALTF, PLLLIITIYNSFVYGILYLML, ELPYIALIIGMLVCTAFLWYF, LIPMVYAGVIFPIGILWFCWT, AGSFIGFGLMGIFLPCLNYII, AASAVAANTFMRSAFGAVFPLFA, and WAGLLLGLFAAALIPVPLFFL.

This sequence belongs to the major facilitator superfamily. DHA1 family. Polyamines/proton antiporter (TC 2.A.1.2.16) subfamily.

It is found in the cell membrane. Multidrug resistance transporter involved in resistance to azole antifungal drugs such as the imidazoles miconazole, ketoconazole, and tioconazole; as well as the triazoles itraconazole and fluconazole. Also plays a role in the resistance to other antifungal drug families such as the polyene amphotericin B, the pyrimide analog flucytosine, the fungicide mancozeb, and the polyamine spermine. Decreases the intracellular accumulation of clotrimazole by mediating its extrusion from cells. Involved in virulence by conferring resistance to the human antimicrobial peptide histatin-5. The protein is Multidrug transporter TPO1_1 of Candida glabrata (strain ATCC 2001 / BCRC 20586 / JCM 3761 / NBRC 0622 / NRRL Y-65 / CBS 138) (Yeast).